Here is a 44-residue protein sequence, read N- to C-terminus: Thymosin beta (44 aa).

Over residues 1–17 (MSDKPDVKEVESFDKTT) the composition is skewed to basic and acidic residues. A disordered region spans residues 1–44 (MSDKPDVKEVESFDKTTLKKTTTNEKNTLPTKEVIEQEKSGGSD). Low complexity predominate over residues 19–32 (KKTTTNEKNTLPTK). A compositionally biased stretch (basic and acidic residues) spans 33-44 (EVIEQEKSGGSD).

Belongs to the thymosin beta family.

It localises to the cytoplasm. The protein localises to the cytoskeleton. Functionally, plays an important role in the organization of the cytoskeleton. Binds to and sequesters actin monomers (G actin) and therefore inhibits actin polymerization. This is Thymosin beta from Gillichthys mirabilis (Long-jawed mudsucker).